Consider the following 280-residue polypeptide: 2-dehydro-3-deoxyphosphooctonate aldolase (280 aa).

It belongs to the KdsA family.

The protein localises to the cytoplasm. It catalyses the reaction D-arabinose 5-phosphate + phosphoenolpyruvate + H2O = 3-deoxy-alpha-D-manno-2-octulosonate-8-phosphate + phosphate. It participates in carbohydrate biosynthesis; 3-deoxy-D-manno-octulosonate biosynthesis; 3-deoxy-D-manno-octulosonate from D-ribulose 5-phosphate: step 2/3. The protein operates within bacterial outer membrane biogenesis; lipopolysaccharide biosynthesis. In Rhizobium meliloti (strain 1021) (Ensifer meliloti), this protein is 2-dehydro-3-deoxyphosphooctonate aldolase.